Consider the following 450-residue polypeptide: Cytidylate cyclase (450 aa).

Residues 97-236 form the Guanylate cyclase domain; the sequence is VTMFVDIRKS…LPVDMTAKLQ (140 aa). Phenylalanine 100 contributes to the a ribonucleoside 5'-triphosphate binding site. Mn(2+)-binding residues include aspartate 102, isoleucine 103, and aspartate 146. An AGS-C domain region spans residues 318 to 450; the sequence is PNQFNFECFV…YRNIIGVYIK (133 aa).

This sequence belongs to the adenylyl cyclase class-4/guanylyl cyclase family. Pyrimidine cyclase subfamily. Homodimer. It depends on Mn(2+) as a cofactor.

It localises to the cytoplasm. The enzyme catalyses CTP = 3',5'-cyclic CMP + diphosphate. With respect to regulation, in E.coli strain MG1655 transformed with both genes cCMP appears between 15 and 30 minutes after infection with phage T5 (at protein level). No cCMP accumulates in uninfected cells. Its function is as follows. Pycsar (pyrimidine cyclase system for antiphage resistance) provides immunity against bacteriophage. The pyrimidine cyclase (PycC) synthesizes cyclic nucleotides in response to infection; these serve as specific second messenger signals. The signal activates the adjacent effector, leading to bacterial cell death and abortive phage infection. A clade E Pycsar system. In terms of biological role, the pyrimidine cyclase gene of a two-gene Pycsar system, generates cyclic CMP (cCMP) from CTP in response to bacteriophage infection. Has little to no activity on ATP, GTP or UTP. Expression of this and adjacent effector EcPycTM (AC P0DV25) confers resistance to bacteriophage P1 and T5; expression of this gene alone does not confer resistance. When cells expressing the Pycsar system are infected by phage T5 at low multiplicity of infection (0.2 MOI) the culture survives, at 2.0 MOI bacteria enter growth arrest. The same cells enter growth arrest after exposure to 250 uM cCMP but not cUMP; thus the effector protein responds only to the cNMP produced by its cognate NTP cyclase. Some of the cells treated with cCMP have abnormal membrane protrusions. This Escherichia coli protein is Cytidylate cyclase.